A 334-amino-acid polypeptide reads, in one-letter code: Holliday junction branch migration complex subunit RuvB (334 aa).

The large ATPase domain (RuvB-L) stretch occupies residues 4–186 (ADRLIAPISN…FGIVQRLEYY (183 aa)). ATP is bound by residues Ile-25, Arg-26, Gly-67, Lys-70, Thr-71, Thr-72, 133-135 (EDY), Arg-176, Tyr-186, and Arg-223. A Mg(2+)-binding site is contributed by Thr-71. A small ATPAse domain (RuvB-S) region spans residues 187–257 (KVADLQHIVQ…TADRALNMLD (71 aa)). Positions 260-334 (HQGFDYMDRK…RAYLHFGIEK (75 aa)) are head domain (RuvB-H). Residues Arg-315 and Arg-320 each contribute to the DNA site.

Belongs to the RuvB family. In terms of assembly, homohexamer. Forms an RuvA(8)-RuvB(12)-Holliday junction (HJ) complex. HJ DNA is sandwiched between 2 RuvA tetramers; dsDNA enters through RuvA and exits via RuvB. An RuvB hexamer assembles on each DNA strand where it exits the tetramer. Each RuvB hexamer is contacted by two RuvA subunits (via domain III) on 2 adjacent RuvB subunits; this complex drives branch migration. In the full resolvosome a probable DNA-RuvA(4)-RuvB(12)-RuvC(2) complex forms which resolves the HJ.

The protein resides in the cytoplasm. It carries out the reaction ATP + H2O = ADP + phosphate + H(+). In terms of biological role, the RuvA-RuvB-RuvC complex processes Holliday junction (HJ) DNA during genetic recombination and DNA repair, while the RuvA-RuvB complex plays an important role in the rescue of blocked DNA replication forks via replication fork reversal (RFR). RuvA specifically binds to HJ cruciform DNA, conferring on it an open structure. The RuvB hexamer acts as an ATP-dependent pump, pulling dsDNA into and through the RuvAB complex. RuvB forms 2 homohexamers on either side of HJ DNA bound by 1 or 2 RuvA tetramers; 4 subunits per hexamer contact DNA at a time. Coordinated motions by a converter formed by DNA-disengaged RuvB subunits stimulates ATP hydrolysis and nucleotide exchange. Immobilization of the converter enables RuvB to convert the ATP-contained energy into a lever motion, pulling 2 nucleotides of DNA out of the RuvA tetramer per ATP hydrolyzed, thus driving DNA branch migration. The RuvB motors rotate together with the DNA substrate, which together with the progressing nucleotide cycle form the mechanistic basis for DNA recombination by continuous HJ branch migration. Branch migration allows RuvC to scan DNA until it finds its consensus sequence, where it cleaves and resolves cruciform DNA. This is Holliday junction branch migration complex subunit RuvB from Vibrio cholerae serotype O1 (strain ATCC 39315 / El Tor Inaba N16961).